We begin with the raw amino-acid sequence, 355 residues long: Ribosomal RNA large subunit methyltransferase M (355 aa).

S-adenosyl-L-methionine-binding positions include Ser191, 224–227 (APGG), Asp243, Asp263, and Asp279. Residue Lys308 is the Proton acceptor of the active site.

This sequence belongs to the class I-like SAM-binding methyltransferase superfamily. RNA methyltransferase RlmE family. RlmM subfamily. Monomer.

The protein localises to the cytoplasm. It carries out the reaction cytidine(2498) in 23S rRNA + S-adenosyl-L-methionine = 2'-O-methylcytidine(2498) in 23S rRNA + S-adenosyl-L-homocysteine + H(+). Functionally, catalyzes the 2'-O-methylation at nucleotide C2498 in 23S rRNA. The polypeptide is Ribosomal RNA large subunit methyltransferase M (Stenotrophomonas maltophilia (strain R551-3)).